The sequence spans 148 residues: UPF0260 protein Maqu_1608 (148 aa).

The protein belongs to the UPF0260 family.

The sequence is that of UPF0260 protein Maqu_1608 from Marinobacter nauticus (strain ATCC 700491 / DSM 11845 / VT8) (Marinobacter aquaeolei).